The chain runs to 526 residues: Peptide chain release factor 3 (526 aa).

Residues 8-277 form the tr-type G domain; it reads SKRRTFAIIS…GLTRWAPAPQ (270 aa). GTP contacts are provided by residues 17–24, 85–89, and 139–142; these read SHPDAGKT, DTPGH, and NKLD.

It belongs to the TRAFAC class translation factor GTPase superfamily. Classic translation factor GTPase family. PrfC subfamily.

Its subcellular location is the cytoplasm. Increases the formation of ribosomal termination complexes and stimulates activities of RF-1 and RF-2. It binds guanine nucleotides and has strong preference for UGA stop codons. It may interact directly with the ribosome. The stimulation of RF-1 and RF-2 is significantly reduced by GTP and GDP, but not by GMP. The chain is Peptide chain release factor 3 from Vibrio atlanticus (strain LGP32) (Vibrio splendidus (strain Mel32)).